The chain runs to 414 residues: CinA-like protein (414 aa).

The protein belongs to the CinA family.

The chain is CinA-like protein from Citrifermentans bemidjiense (strain ATCC BAA-1014 / DSM 16622 / JCM 12645 / Bem) (Geobacter bemidjiensis).